The primary structure comprises 415 residues: Styrene monooxygenase StyA (415 aa).

It belongs to the StyA family. In terms of assembly, homodimer. A direct interaction with the monooxygenase reductase component StyB seems not to be necessary for the enzymatic activity.

It catalyses the reaction styrene + FADH2 + O2 = (S)-styrene oxide + FAD + H2O + H(+). The protein operates within aromatic compound metabolism. In terms of biological role, styrene monooxygenase which catalyzes the first step in the aerobic styrene degradation pathway by enantioselective epoxidation of the vinyl side chain. In a two-component system, a reductase utilizes NADH to reduce FAD, which is then transferred to the oxygenase; the electron transfer is proposed to occur via a diffusing flavin. The polypeptide is Styrene monooxygenase StyA (styA) (Pseudomonas sp).